The chain runs to 184 residues: Ribosome maturation factor RimM (184 aa).

A PRC barrel domain is found at 93-165 (DEGWYEHELV…YILITPPSGL (73 aa)).

It belongs to the RimM family. Binds ribosomal protein uS19.

The protein localises to the cytoplasm. In terms of biological role, an accessory protein needed during the final step in the assembly of 30S ribosomal subunit, possibly for assembly of the head region. Essential for efficient processing of 16S rRNA. May be needed both before and after RbfA during the maturation of 16S rRNA. It has affinity for free ribosomal 30S subunits but not for 70S ribosomes. The sequence is that of Ribosome maturation factor RimM from Paenarthrobacter aurescens (strain TC1).